The following is a 302-amino-acid chain: uncharacterized protein (302 aa).

Glutamate 47 is an active-site residue.

It belongs to the PhzF family.

This is an uncharacterized protein from Mesorhizobium japonicum (strain LMG 29417 / CECT 9101 / MAFF 303099) (Mesorhizobium loti (strain MAFF 303099)).